We begin with the raw amino-acid sequence, 447 residues long: Trigger factor (447 aa).

The PPIase FKBP-type domain occupies 164–249; sequence GDLVVIDFIG…VKEVKQAVVP (86 aa).

The protein belongs to the FKBP-type PPIase family. Tig subfamily.

It is found in the cytoplasm. The catalysed reaction is [protein]-peptidylproline (omega=180) = [protein]-peptidylproline (omega=0). In terms of biological role, involved in protein export. Acts as a chaperone by maintaining the newly synthesized protein in an open conformation. Functions as a peptidyl-prolyl cis-trans isomerase. The protein is Trigger factor of Rhodospirillum rubrum (strain ATCC 11170 / ATH 1.1.1 / DSM 467 / LMG 4362 / NCIMB 8255 / S1).